A 210-amino-acid chain; its full sequence is Protein GrpE (210 aa).

Residues 1-31 are disordered; it reads MAKDPQTPTDEELARAERDAEPQPGDATDDE. Over residues 12–21 the composition is skewed to basic and acidic residues; the sequence is ELARAERDAE.

Belongs to the GrpE family. In terms of assembly, homodimer.

It localises to the cytoplasm. Participates actively in the response to hyperosmotic and heat shock by preventing the aggregation of stress-denatured proteins, in association with DnaK and GrpE. It is the nucleotide exchange factor for DnaK and may function as a thermosensor. Unfolded proteins bind initially to DnaJ; upon interaction with the DnaJ-bound protein, DnaK hydrolyzes its bound ATP, resulting in the formation of a stable complex. GrpE releases ADP from DnaK; ATP binding to DnaK triggers the release of the substrate protein, thus completing the reaction cycle. Several rounds of ATP-dependent interactions between DnaJ, DnaK and GrpE are required for fully efficient folding. This chain is Protein GrpE, found in Chromohalobacter salexigens (strain ATCC BAA-138 / DSM 3043 / CIP 106854 / NCIMB 13768 / 1H11).